Reading from the N-terminus, the 689-residue chain is Glycine--tRNA ligase beta subunit (689 aa).

The protein belongs to the class-II aminoacyl-tRNA synthetase family. As to quaternary structure, tetramer of two alpha and two beta subunits.

The protein resides in the cytoplasm. It carries out the reaction tRNA(Gly) + glycine + ATP = glycyl-tRNA(Gly) + AMP + diphosphate. This is Glycine--tRNA ligase beta subunit from Yersinia pseudotuberculosis serotype O:1b (strain IP 31758).